We begin with the raw amino-acid sequence, 545 residues long: Hydroxylamine reductase (545 aa).

Residues C3, C6, C15, and C21 each coordinate [4Fe-4S] cluster. Hybrid [4Fe-2O-2S] cluster-binding residues include H240, E264, C309, C401, C429, C454, E488, and K490. C401 bears the Cysteine persulfide mark.

Belongs to the HCP family. [4Fe-4S] cluster serves as cofactor. The cofactor is hybrid [4Fe-2O-2S] cluster.

Its subcellular location is the cytoplasm. The catalysed reaction is A + NH4(+) + H2O = hydroxylamine + AH2 + H(+). Catalyzes the reduction of hydroxylamine to form NH(3) and H(2)O. The protein is Hydroxylamine reductase of Rippkaea orientalis (strain PCC 8801 / RF-1) (Cyanothece sp. (strain PCC 8801)).